Consider the following 1035-residue polypeptide: NHS-like protein 3 (1035 aa).

Val-2 is lipidated: N-myristoyl glycine. 3 disordered regions span residues Lys-23 to Glu-44, Gln-76 to Asn-105, and Ile-133 to Thr-162. Residues Gln-76 to Asp-90 show a composition bias toward basic and acidic residues. A phosphoserine mark is found at Ser-93, Ser-138, Ser-145, and Ser-161. Residue Thr-162 is modified to Phosphothreonine. The residue at position 215 (Ser-215) is a Phosphoserine. At Arg-320 the chain carries Asymmetric dimethylarginine. 7 positions are modified to phosphoserine: Ser-322, Ser-327, Ser-330, Ser-338, Ser-339, Ser-341, and Ser-342. Disordered regions lie at residues Arg-332–Ser-869 and Ser-885–Ala-1035. Residues Ser-338–Thr-365 show a composition bias toward low complexity. Residues Ile-366–Ala-388 are compositionally biased toward polar residues. A phosphoserine mark is found at Ser-400, Ser-404, and Ser-409. A compositionally biased stretch (polar residues) spans Ala-411–Ser-429. The segment covering Ser-431–His-449 has biased composition (basic residues). Positions Arg-517 to Pro-532 are enriched in low complexity. Thr-531 is modified (phosphothreonine). Over residues Pro-543–Pro-552 the composition is skewed to pro residues. A Phosphoserine modification is found at Ser-545. The span at Ser-562–Pro-589 shows a compositional bias: low complexity. Thr-593 carries the post-translational modification Phosphothreonine. Residues Pro-602–Ala-624 are compositionally biased toward pro residues. Position 612 is a phosphoserine (Ser-612). Low complexity-rich tracts occupy residues Ala-625–Pro-645 and Gln-652–Pro-662. Phosphoserine is present on residues Ser-669 and Ser-673. 2 stretches are compositionally biased toward pro residues: residues Ser-669–Thr-685 and Asn-709–Pro-718. Over residues Ser-737–Ala-765 the composition is skewed to low complexity. Residues Pro-771–Ala-784 show a composition bias toward pro residues. The span at Gly-838–Ala-848 shows a compositional bias: low complexity. A phosphoserine mark is found at Ser-858, Ser-862, and Ser-868. The span at Asn-894–Ser-906 shows a compositional bias: pro residues. 4 positions are modified to phosphoserine: Ser-929, Ser-959, Ser-971, and Ser-979. A compositionally biased stretch (pro residues) spans Lys-961–Pro-980. The span at Thr-999 to Ala-1008 shows a compositional bias: basic and acidic residues.

As to expression, expressed in lung.

Able to directly activate the TNF-NFkappaB signaling pathway. This is NHS-like protein 3 from Homo sapiens (Human).